The primary structure comprises 600 residues: Putative heme-binding protein NP_2262A (600 aa).

His180 is a binding site for heme. A disordered region spans residues 261-289 (TSETGHGGADSQTSSESSGGRPSTDPSHD). Over residues 270-285 (DSQTSSESSGGRPSTD) the composition is skewed to polar residues. The ABM domain maps to 510 to 598 (GTMGMFYTVK…VLADRPRHVF (89 aa)).

It in the N-terminal section; belongs to the ChdC family.

The chain is Putative heme-binding protein NP_2262A from Natronomonas pharaonis (strain ATCC 35678 / DSM 2160 / CIP 103997 / JCM 8858 / NBRC 14720 / NCIMB 2260 / Gabara) (Halobacterium pharaonis).